The sequence spans 570 residues: Formate--tetrahydrofolate ligase (570 aa).

Residue 65–72 (TPFGEGKT) coordinates ATP.

The protein belongs to the formate--tetrahydrofolate ligase family.

The enzyme catalyses (6S)-5,6,7,8-tetrahydrofolate + formate + ATP = (6R)-10-formyltetrahydrofolate + ADP + phosphate. The protein operates within one-carbon metabolism; tetrahydrofolate interconversion. In Shewanella sediminis (strain HAW-EB3), this protein is Formate--tetrahydrofolate ligase.